An 802-amino-acid polypeptide reads, in one-letter code: Serine/threonine-protein kinase zyg-8 (802 aa).

Polar residues predominate over residues 1–13 (MPQTSAWQLNDTT). The tract at residues 1–102 (MPQTSAWQLN…SAPSTSSAHR (102 aa)) is disordered. Residues 15–24 (RPPPPPPPPG) are compositionally biased toward pro residues. A compositionally biased stretch (low complexity) spans 89 to 99 (SPSSSAPSTSS). Doublecortin domains follow at residues 211-298 (KRLR…VDYS) and 340-423 (RIIK…ADDL). The disordered stretch occupies residues 430-470 (HKSVGSGTSSNMRRTSRRSTMPNRNESLRHDRSGSVIPDQD). The segment covering 434–454 (GSGTSSNMRRTSRRSTMPNRN) has biased composition (low complexity). The 262-residue stretch at 482–743 (FQLVRLIGDG…AGELLNDEWM (262 aa)) folds into the Protein kinase domain. ATP is bound by residues 488 to 496 (IGDGNTAVV) and Lys-512. Asp-604 acts as the Proton acceptor in catalysis.

Belongs to the protein kinase superfamily. CAMK Ser/Thr protein kinase family. CaMK subfamily. Interacts with tac-1. Expressed in AFD thermosensory neurons. Expressed in cells near the nerve ring, in motor neurons in the ventral nerve cord and in the six touch receptor neurons including ALML/R, PLML/R and AVM and PVM. Expressed in hypodermal and neural tissues and in the germline.

The protein localises to the cytoplasm. Its subcellular location is the cytoskeleton. The protein resides in the microtubule organizing center. It localises to the centrosome. It is found in the spindle. It catalyses the reaction L-seryl-[protein] + ATP = O-phospho-L-seryl-[protein] + ADP + H(+). It carries out the reaction L-threonyl-[protein] + ATP = O-phospho-L-threonyl-[protein] + ADP + H(+). Probable kinase. Kinase activity may be involved in positioning of spindle poles in meiosis and mitosis. Plays a role in spindle positioning during asymmetric division of one-cell stage embryos. Affects spindle position by promoting microtubule assembly during anaphase. Plays a role in the assembly and stability of oocyte spindle, perhaps balancing the forces in the spindle and maintaining their morphology during metaphase. Plays a role in cell division and in embryonic viability up until gastrulation. Required for neuronal morphology and polarity and restricting ectopic process outgrowth; probably as a result of a role in maintaining microtubule integrity. Involved in maintaining neuronal microtubule number, length and packing. May promote axonal and synaptic growth. Plays a role in regulating thermotaxis responses in AFD thermosensory neurons. Required for touch sensitivity in adult touch response receptor neurons. This is Serine/threonine-protein kinase zyg-8 from Caenorhabditis elegans.